We begin with the raw amino-acid sequence, 696 residues long: DNA topoisomerase 6 subunit B (696 aa).

The tract at residues 1 to 36 is disordered; the sequence is MDDDAGDGAASGGTKRKVTAASSSAAAKGKAAGKGK. Positions 20–36 are enriched in low complexity; sequence AASSSAAAKGKAAGKGK. ATP is bound by residues N88, D187, 208 to 209, 217 to 224, and K543; these read TK and GKFGLGAK.

It belongs to the TOP6B family. As to quaternary structure, homodimer. Heterotetramer of two TOP6A and two TOP6B subunits. Interacts with SPO11-4.

The protein resides in the nucleus. The catalysed reaction is ATP-dependent breakage, passage and rejoining of double-stranded DNA.. In terms of biological role, component of the DNA topoisomerase VI involved in chromatin organization and progression of endoreduplication cycles. Relaxes both positive and negative superturns and exhibits a strong decatenase activity. The B subunit binds ATP. This Oryza sativa subsp. japonica (Rice) protein is DNA topoisomerase 6 subunit B (TOP6B).